The sequence spans 296 residues: Sulfotransferase 6B1 (296 aa).

The Proton acceptor role is filled by His-112. 3'-phosphoadenylyl sulfate contacts are provided by residues Arg-134, Ser-142, Tyr-197, and 253-255 (RKG).

It belongs to the sulfotransferase 1 family.

Its subcellular location is the cytoplasm. The protein resides in the cytosol. The enzyme catalyses thyroxine + 3'-phosphoadenylyl sulfate = thyroxine sulfate + adenosine 3',5'-bisphosphate + H(+). With respect to regulation, strongly inhibited by the divalent metal cations Fe(2+), Hg(2+), Co(2+), Zn(2+), Cu(2+) and Cd(2+). Sulfotransferase that utilizes 3'-phospho-5'-adenylyl sulfate (PAPS) as sulfonate donor to catalyze the sulfate conjugation of a variety of xenobiotic and endogenous compounds, including dopamine, T3 (triiodo-L-thyronine), T4 (thyroxine), flavonoids, isoflavonoids, and other phenolic compounds. The chain is Sulfotransferase 6B1 from Danio rerio (Zebrafish).